Here is a 323-residue protein sequence, read N- to C-terminus: Glyoxylate/hydroxypyruvate reductase B (323 aa).

The segment at 37-62 (AEHGGAGARRRHDRLQQHGGSSAAGE) is disordered. Catalysis depends on residues Arg236 and Glu265. His284 functions as the Proton donor in the catalytic mechanism.

Belongs to the D-isomer specific 2-hydroxyacid dehydrogenase family. GhrB subfamily. In terms of assembly, homodimer.

The protein resides in the cytoplasm. The enzyme catalyses glycolate + NADP(+) = glyoxylate + NADPH + H(+). It catalyses the reaction (R)-glycerate + NAD(+) = 3-hydroxypyruvate + NADH + H(+). It carries out the reaction (R)-glycerate + NADP(+) = 3-hydroxypyruvate + NADPH + H(+). Catalyzes the NADPH-dependent reduction of glyoxylate and hydroxypyruvate into glycolate and glycerate, respectively. This chain is Glyoxylate/hydroxypyruvate reductase B (tkrA), found in Enterobacter agglomerans (Erwinia herbicola).